Reading from the N-terminus, the 163-residue chain is UPF0763 protein CJJ81176_1011 (163 aa).

Belongs to the UPF0763 family.

This chain is UPF0763 protein CJJ81176_1011, found in Campylobacter jejuni subsp. jejuni serotype O:23/36 (strain 81-176).